The sequence spans 1082 residues: MAAFKPNPINYILGLDIGIASVGWAMVEIDEDENPICLIDLGVRVFERAEVPKTGDSLAMARRLARSVRRLTRRRAHRLLRARRLLKREGVLQAADFDENGLIKSLPNTPWQLRAAALDRKLTPLEWSAVLLHLIKHRGYLSQRKNEGETADKELGALLKGVADNAHALQTGDFRTPAELALNKFEKESGHIRNQRGDYSHTFSRKDLQAELILLFEKQKEFGNPHVSGGLKEGIETLLMTQRPALSGDAVQKMLGHCTFEPAEPKAAKNTYTAERFIWLTKLNNLRILEQGSERPLTDTERATLMDEPYRKSKLTYAQARKLLGLEDTAFFKGLRYGKDNAEASTLMEMKAYHAISRALEKEGLKDKKSPLNLSPELQDEIGTAFSLFKTDEDITGRLKDRIQPEILEALLKHISFDKFVQISLKALRRIVPLMEQGKRYDEACAEIYGDHYGKKNTEEKIYLPPIPADEIRNPVVLRALSQARKVINGVVRRYGSPARIHIETAREVGKSFKDRKEIEKRQEENRKDREKAAAKFREYFPNFVGEPKSKDILKLRLYEQQHGKCLYSGKEINLGRLNEKGYVEIDHALPFSRTWDDSFNNKVLVLGSENQNKGNQTPYEYFNGKDNSREWQEFKARVETSRFPRSKKQRILLQKFDEDGFKERNLNDTRYVNRFLCQFVADRMRLTGKGKKRVFASNGQITNLLRGFWGLRKVRAENDRHHALDAVVVACSTVAMQQKITRFVRYKEMNAFDGKTIDKETGEVLHQKTHFPQPWEFFAQEVMIRVFGKPDGKPEFEEADTPEKLRTLLAEKLSSRPEAVHEYVTPLFVSRAPNRKMSGQGHMETVKSAKRLDEGVSVLRVPLTQLKLKDLEKMVNREREPKLYEALKARLEAHKDDPAKAFAEPFYKYDKAGNRTQQVKAVRVEQVQKTGVWVRNHNGIADNATMVRVDVFEKGDKYYLVPIYSWQVAKGILPDRAVVQGKDEEDWQLIDDSFNFKFSLHPNDLVEVITKKARMFGYFASCHRGTGNINIRIHDLDHKIGKNGILEGIGVKTALSFQKYQIDELGKEIRPCRLKKRPPVR.

Residue Asp16 is the For RuvC-like nuclease domain of the active site. Mg(2+)-binding residues include Asp16, Glu504, and Glu508. An HNH Cas9-type domain is found at 512–667 (SFKDRKEIEK…DEDGFKERNL (156 aa)). The active-site Proton acceptor for HNH nuclease domain is His588. A Mg(2+)-binding site is contributed by His723.

The protein belongs to the CRISPR-associated protein Cas9 family. Subtype II-C subfamily. As to quaternary structure, monomer. Binds crRNA and tracrRNA. Requires Mg(2+) as cofactor.

CRISPR (clustered regularly interspaced short palindromic repeat) is an adaptive immune system that provides protection against mobile genetic elements (viruses, transposable elements and conjugative plasmids). CRISPR clusters contain spacers, sequences complementary to antecedent mobile elements, and target invading nucleic acids. CRISPR clusters are transcribed and processed into CRISPR RNA (crRNA). In type II CRISPR systems correct processing of pre-crRNA requires a trans-encoded small RNA (tracrRNA), endogenous ribonuclease 3 (rnc) and this protein. The tracrRNA serves as a guide for ribonuclease 3-aided processing of pre-crRNA. Subsequently Cas9/crRNA/tracrRNA endonucleolytically cleaves linear or circular dsDNA target complementary to the spacer; Cas9 is inactive in the absence of the 2 guide RNAs (gRNA). Cas9 recognizes the protospacer adjacent motif (PAM) in the CRISPR repeat sequences to help distinguish self versus nonself, as targets within the bacterial CRISPR locus do not have PAMs. PAM recognition is also required for catalytic activity. Cuts target DNA in Cas9:gRNAs mixing experiments with C.jejuni strain NCTC 11168 and P.multocoda strain Pm70. This Neisseria meningitidis serogroup A / serotype 4A (strain DSM 15465 / Z2491) protein is CRISPR-associated endonuclease Cas9.